We begin with the raw amino-acid sequence, 472 residues long: Sulfate adenylyltransferase subunit 1 (472 aa).

Positions 24–240 (KSLLRFLTCG…ENAEVGTRDL (217 aa)) constitute a tr-type G domain. The interval 33 to 40 (GSVDDGKS) is G1. 33-40 (GSVDDGKS) contacts GTP. The segment at 91-95 (GITID) is G2. A G3 region spans residues 112-115 (DTPG). Residues 112 to 116 (DTPGH) and 167 to 170 (NKMD) contribute to the GTP site. Positions 167–170 (NKMD) are G4. A G5 region spans residues 204-206 (SAL).

Belongs to the TRAFAC class translation factor GTPase superfamily. Classic translation factor GTPase family. CysN/NodQ subfamily. In terms of assembly, heterodimer composed of CysD, the smaller subunit, and CysN.

It catalyses the reaction sulfate + ATP + H(+) = adenosine 5'-phosphosulfate + diphosphate. It participates in sulfur metabolism; hydrogen sulfide biosynthesis; sulfite from sulfate: step 1/3. In terms of biological role, with CysD forms the ATP sulfurylase (ATPS) that catalyzes the adenylation of sulfate producing adenosine 5'-phosphosulfate (APS) and diphosphate, the first enzymatic step in sulfur assimilation pathway. APS synthesis involves the formation of a high-energy phosphoric-sulfuric acid anhydride bond driven by GTP hydrolysis by CysN coupled to ATP hydrolysis by CysD. This chain is Sulfate adenylyltransferase subunit 1, found in Tolumonas auensis (strain DSM 9187 / NBRC 110442 / TA 4).